An 889-amino-acid chain; its full sequence is Phosphofurin acidic cluster sorting protein 2 (889 aa).

Disordered stretches follow at residues 180–246, 293–463, and 687–740; these read DHED…TSMT, LDME…PDAR, and SSAT…SQGV. The segment covering 343–358 has biased composition (basic and acidic residues); it reads SHKEPPSPADVPEKTR. Residues S390, S416, S453, S691, and S694 each carry the phosphoserine modification. Low complexity-rich tracts occupy residues 687-720 and 727-737; these read SSAT…KEAS and PSVSGGLSSPS.

It belongs to the PACS family. Interacts with BID and PKD2. Interacts with SIRT1. Interacts with HDAC1. Interacts with TRPV1. Interacts with WDR37. As to quaternary structure, (Microbial infection) Interacts with HIV-1 Nef. In terms of tissue distribution, broadly expressed, with greatest levels in skeletal muscle followed by heart, brain, pancreas and testis.

The protein localises to the endoplasmic reticulum. It is found in the mitochondrion. Multifunctional sorting protein that controls the endoplasmic reticulum (ER)-mitochondria communication, including the apposition of mitochondria with the ER and ER homeostasis. In addition, in response to apoptotic inducer, translocates BIB to mitochondria, which initiates a sequence of events including the formation of mitochondrial truncated BID, the release of cytochrome c, the activation of caspase-3 thereby causing cell death. May also be involved in ion channel trafficking, directing acidic cluster-containing ion channels to distinct subcellular compartments. The polypeptide is Phosphofurin acidic cluster sorting protein 2 (Homo sapiens (Human)).